Consider the following 206-residue polypeptide: FMN-dependent NADH:quinone oxidoreductase 2 (206 aa).

FMN-binding positions include S10, 16 to 18, and 140 to 143; these read SYS and SCGG.

Belongs to the azoreductase type 1 family. As to quaternary structure, homodimer. FMN is required as a cofactor.

The enzyme catalyses 2 a quinone + NADH + H(+) = 2 a 1,4-benzosemiquinone + NAD(+). It carries out the reaction N,N-dimethyl-1,4-phenylenediamine + anthranilate + 2 NAD(+) = 2-(4-dimethylaminophenyl)diazenylbenzoate + 2 NADH + 2 H(+). In terms of biological role, quinone reductase that provides resistance to thiol-specific stress caused by electrophilic quinones. Also exhibits azoreductase activity. Catalyzes the reductive cleavage of the azo bond in aromatic azo compounds to the corresponding amines. The polypeptide is FMN-dependent NADH:quinone oxidoreductase 2 (Cupriavidus pinatubonensis (strain JMP 134 / LMG 1197) (Cupriavidus necator (strain JMP 134))).